The following is an 862-amino-acid chain: DNA mismatch repair protein MutS (862 aa).

Residue 608 to 615 participates in ATP binding; that stretch reads GPNMAGKS.

It belongs to the DNA mismatch repair MutS family.

In terms of biological role, this protein is involved in the repair of mismatches in DNA. It is possible that it carries out the mismatch recognition step. This protein has a weak ATPase activity. This Borreliella afzelii (strain PKo) (Borrelia afzelii) protein is DNA mismatch repair protein MutS.